We begin with the raw amino-acid sequence, 452 residues long: GTPase Der (452 aa).

EngA-type G domains follow at residues 4 to 169 (PIVA…PAPQ) and 177 to 352 (IKVA…QEHR). GTP-binding positions include 10 to 17 (GRPNVGKS), 57 to 61 (DTGGL), 120 to 123 (NKCE), 183 to 190 (GRPNVGKS), 230 to 234 (DTAGI), and 295 to 298 (NKWD). A KH-like domain is found at 353–439 (RRVTTAVINE…IRLFWRGKKV (87 aa)).

Belongs to the TRAFAC class TrmE-Era-EngA-EngB-Septin-like GTPase superfamily. EngA (Der) GTPase family. Associates with the 50S ribosomal subunit.

Its function is as follows. GTPase that plays an essential role in the late steps of ribosome biogenesis. In Synechocystis sp. (strain ATCC 27184 / PCC 6803 / Kazusa), this protein is GTPase Der.